A 152-amino-acid polypeptide reads, in one-letter code: SXP/RAL-2 family protein Ani s 5 (152 aa).

Positions 1 to 18 are cleaved as a signal peptide; sequence MKTLIVAALFCTIGMALA. Necessary for IgE-binding stretches follow at residues 25–42, 49–54, 58–66, and 103–120; these read PPFL…FFEL, KTDPEI, LDAWVDTLG, and KKAD…SLNG. 2 igG4-binding regions span residues 49–68 and 118–137; these read KTDP…LGGD and LNGI…LPQS. The segment at 127–146 is igE-binding and IgG4-binding; it reads IQAIYKTLPQSVKDELEKGI.

The protein belongs to the SXP/RAL-2 family. Monomer. In terms of tissue distribution, excretory gland, ventriculus, and the luminal epithelium of the intestine of the larvae.

Its subcellular location is the secreted. In Anisakis simplex (Herring worm), this protein is SXP/RAL-2 family protein Ani s 5.